Consider the following 800-residue polypeptide: Probable replication endonuclease from prophage-like region (800 aa).

Residues Tyr-503 and Tyr-507 each act as O-(5'-phospho-DNA)-tyrosine intermediate in the active site.

The protein belongs to the phage GPA family.

Functionally, possible endonuclease which induces a single-strand cut and initiates DNA replication. The protein is Probable replication endonuclease from prophage-like region of Salmonella paratyphi A (strain ATCC 9150 / SARB42).